We begin with the raw amino-acid sequence, 155 residues long: Phospholipase A2 A2-actitoxin-Ucs2a (155 aa).

The signal sequence occupies residues 1–19 (MKNNIILVILLGISVFVDC). The propeptide occupies 20-42 (LPLNDQEEDKSLNAQESEVSAVQ). 6 cysteine pairs are disulfide-bonded: Cys55-Cys118, Cys71-Cys87, Cys86-Cys143, Cys93-Cys136, Cys100-Cys129, and Cys122-Cys134. Positions 72 and 74 each coordinate Ca(2+). His90 is a catalytic residue. Ca(2+) is bound at residue Asp91. The active site involves Asp137.

The protein belongs to the phospholipase A2 family. Ca(2+) is required as a cofactor.

The protein localises to the secreted. Its subcellular location is the nematocyst. The catalysed reaction is a 1,2-diacyl-sn-glycero-3-phosphocholine + H2O = a 1-acyl-sn-glycero-3-phosphocholine + a fatty acid + H(+). Functionally, PLA2 catalyzes the calcium-dependent hydrolysis of the 2-acyl groups in 3-sn-phosphoglycerides. The sequence is that of Phospholipase A2 A2-actitoxin-Ucs2a from Urticina crassicornis (Mottled anemone).